A 501-amino-acid chain; its full sequence is DNA nucleotidylexotransferase (501 aa).

Positions 11-17 match the Nuclear localization signal motif; that stretch reads KKRKRPV. The 98-residue stretch at 24-121 folds into the BRCT domain; that stretch reads QVEVKFKEVT…RPVRVETRHS (98 aa). Residues 249 to 253 form an involved in DNA binding region; sequence VGPKT. Residues 324–329 and 333–336 each bind a 2'-deoxyribonucleoside 5'-triphosphate; these read GFRRGK and HDVD. Mg(2+) contacts are provided by Asp-334, Asp-336, and Asp-426. 441–442 is an a 2'-deoxyribonucleoside 5'-triphosphate binding site; the sequence is GW.

Belongs to the DNA polymerase type-X family. Requires Mg(2+) as cofactor.

The protein localises to the nucleus. The catalysed reaction is DNA(n) + a 2'-deoxyribonucleoside 5'-triphosphate = DNA(n+1) + diphosphate. Its function is as follows. Template-independent DNA polymerase which catalyzes the random addition of deoxynucleoside 5'-triphosphate to the 3'-end of a DNA initiator. One of the in vivo functions of this enzyme is the addition of nucleotides at the junction (N region) of rearranged Ig heavy chain and T-cell receptor gene segments during the maturation of B- and T-cells. The polypeptide is DNA nucleotidylexotransferase (dntt) (Oncorhynchus mykiss (Rainbow trout)).